A 97-amino-acid chain; its full sequence is Co-chaperonin GroES (97 aa).

The protein belongs to the GroES chaperonin family. As to quaternary structure, heptamer of 7 subunits arranged in a ring. Interacts with the chaperonin GroEL.

The protein localises to the cytoplasm. Functionally, together with the chaperonin GroEL, plays an essential role in assisting protein folding. The GroEL-GroES system forms a nano-cage that allows encapsulation of the non-native substrate proteins and provides a physical environment optimized to promote and accelerate protein folding. GroES binds to the apical surface of the GroEL ring, thereby capping the opening of the GroEL channel. This chain is Co-chaperonin GroES, found in Yersinia enterocolitica serotype O:8 / biotype 1B (strain NCTC 13174 / 8081).